A 278-amino-acid polypeptide reads, in one-letter code: Large ribosomal subunit protein uL24m (278 aa).

A KOW domain is found at 109-142; sequence FFPGDLVQVMVGKDKGRQGLVLTISRDSSEVVVD.

It belongs to the universal ribosomal protein uL24 family.

The protein localises to the mitochondrion. This chain is Large ribosomal subunit protein uL24m (mrpl-24), found in Caenorhabditis briggsae.